The sequence spans 546 residues: Zinc metalloproteinase nas-9 (546 aa).

The first 14 residues, 1-14 (MIFLLFVVFPFVYA), serve as a signal peptide directing secretion. The propeptide occupies 15 to 300 (QLLPELLAGF…GGGGGGRVPR (286 aa)). Residue N248 is glycosylated (N-linked (GlcNAc...) asparagine). The Peptidase M12A domain maps to 308-507 (SAVQKWDIWK…IRLLKKMYCR (200 aa)). 5 cysteine pairs are disulfide-bonded: C347–C506, C372–C392, C510–C546, C517–C539, and C526–C543. A Zn(2+)-binding site is contributed by H401. E402 is a catalytic residue. H405 and H411 together coordinate Zn(2+). Residues 510–546 (CDDQNVHCGTWALHGYCKMKEQMKWMNENCKASCDKC) form the ShKT domain.

It depends on Zn(2+) as a cofactor. As to expression, expressed in hypodermis, uterus and spermatheca.

It is found in the secreted. Functionally, metalloprotease. The protein is Zinc metalloproteinase nas-9 (nas-9) of Caenorhabditis elegans.